Reading from the N-terminus, the 225-residue chain is Biosynthetic peptidoglycan transglycosylase (225 aa).

Residues 8 to 28 traverse the membrane as a helical segment; that stretch reads VLLIFIGAILFIQLWIFSSLV.

Belongs to the glycosyltransferase 51 family.

Its subcellular location is the cell inner membrane. It catalyses the reaction [GlcNAc-(1-&gt;4)-Mur2Ac(oyl-L-Ala-gamma-D-Glu-L-Lys-D-Ala-D-Ala)](n)-di-trans,octa-cis-undecaprenyl diphosphate + beta-D-GlcNAc-(1-&gt;4)-Mur2Ac(oyl-L-Ala-gamma-D-Glu-L-Lys-D-Ala-D-Ala)-di-trans,octa-cis-undecaprenyl diphosphate = [GlcNAc-(1-&gt;4)-Mur2Ac(oyl-L-Ala-gamma-D-Glu-L-Lys-D-Ala-D-Ala)](n+1)-di-trans,octa-cis-undecaprenyl diphosphate + di-trans,octa-cis-undecaprenyl diphosphate + H(+). It participates in cell wall biogenesis; peptidoglycan biosynthesis. Peptidoglycan polymerase that catalyzes glycan chain elongation from lipid-linked precursors. The chain is Biosynthetic peptidoglycan transglycosylase from Acinetobacter baumannii (strain ATCC 17978 / DSM 105126 / CIP 53.77 / LMG 1025 / NCDC KC755 / 5377).